A 166-amino-acid chain; its full sequence is Lithostathine-1-beta (166 aa).

An N-terminal signal peptide occupies residues 1–22; that stretch reads MAQTNSFFMLISSLMFLSLSQG. O-linked (GalNAc...) threonine glycosylation is present at threonine 27. In terms of domain architecture, C-type lectin spans 34-164; that stretch reads ISCPEGTNAY…EKKFSFVCKF (131 aa). Intrachain disulfides connect cysteine 36-cysteine 47, cysteine 64-cysteine 162, and cysteine 137-cysteine 154.

All O-linked glycans consist of Gal-GlcNAc-Gal-GalNAc tetrasaccharide core and get elongated (microheterogeneity).

It is found in the secreted. In terms of biological role, might act as an inhibitor of spontaneous calcium carbonate precipitation. May be associated with neuronal sprouting in brain, and with brain and pancreas regeneration. The chain is Lithostathine-1-beta (REG1B) from Homo sapiens (Human).